We begin with the raw amino-acid sequence, 326 residues long: tRNA dimethylallyltransferase (326 aa).

10-17 is an ATP binding site; the sequence is GPTGTGKT. 12-17 is a substrate binding site; it reads TGTGKT. The tract at residues 35–38 is interaction with substrate tRNA; the sequence is DSMQ.

The protein belongs to the IPP transferase family. Monomer. Requires Mg(2+) as cofactor.

The catalysed reaction is adenosine(37) in tRNA + dimethylallyl diphosphate = N(6)-dimethylallyladenosine(37) in tRNA + diphosphate. Its function is as follows. Catalyzes the transfer of a dimethylallyl group onto the adenine at position 37 in tRNAs that read codons beginning with uridine, leading to the formation of N6-(dimethylallyl)adenosine (i(6)A). This is tRNA dimethylallyltransferase from Dictyoglomus turgidum (strain DSM 6724 / Z-1310).